Here is a 64-residue protein sequence, read N- to C-terminus: UPF0370 protein YE1145 (64 aa).

A helical membrane pass occupies residues 3 to 23 (WLADYWWVVLIILVGMILNGI). Residues 36 to 64 (SNKPEIPPHRDNNAQWDDDDDWPDKDKKK) are disordered.

It belongs to the UPF0370 family.

The protein resides in the cell membrane. The sequence is that of UPF0370 protein YE1145 from Yersinia enterocolitica serotype O:8 / biotype 1B (strain NCTC 13174 / 8081).